Here is a 117-residue protein sequence, read N- to C-terminus: MANHFRTDRVGMEIKREVNEILQKKVRDPRVQGVTITDVQMVGDLSTAKVYYTIMSNLASDNQKAQTGLEKATGTIKRELGRKLTLYKIPDLVFEKDQSIEYGNKIDQMLRALDQKD.

The protein belongs to the RbfA family. As to quaternary structure, monomer. Binds 30S ribosomal subunits, but not 50S ribosomal subunits or 70S ribosomes.

It is found in the cytoplasm. In terms of biological role, one of several proteins that assist in the late maturation steps of the functional core of the 30S ribosomal subunit. Associates with free 30S ribosomal subunits (but not with 30S subunits that are part of 70S ribosomes or polysomes). Required for efficient processing of 16S rRNA. May interact with the 5'-terminal helix region of 16S rRNA. The protein is Ribosome-binding factor A of Streptococcus suis (strain 98HAH33).